Consider the following 578-residue polypeptide: Pentatricopeptide repeat-containing protein At4g22760 (578 aa).

PPR repeat units lie at residues 68–102 (DSFS…GIPP), 103–137 (SSHA…GLCG), 138–168 (CVYV…IAEK), 169–203 (NTVS…DAVS), 204–230 (WNLI…MPLK), 231–261 (SPAS…MPQK), 262–292 (NGVS…MSKK), 293–327 (DKLV…NSYI), 330–364 (DEIT…GIKI), 365–395 (DDLL…LNKK), 396–430 (DTVS…KIPP), 431–465 (NVVT…NLEP), and 466–496 (SADH…MPMQ). Positions 501-576 (VWGALLLASG…TLGCSWVEGS (76 aa)) are type E motif.

Belongs to the PPR family. PCMP-E subfamily.

In Arabidopsis thaliana (Mouse-ear cress), this protein is Pentatricopeptide repeat-containing protein At4g22760 (PCMP-E6).